The sequence spans 349 residues: Interferon regulatory factor 2 (349 aa).

Positions 5-113 (RMRMRPWLEE…NAFRVYRMLP (109 aa)) form a DNA-binding region, IRF tryptophan pentad repeat. Residues K75 and K78 each carry the N6-acetyllysine modification. The interval 117-148 (RPSKKGKKPKTEKEDKVKHIKQEPVESSLGLS) is disordered. Positions 125–140 (PKTEKEDKVKHIKQEP) are enriched in basic and acidic residues. A Glycyl lysine isopeptide (Lys-Gly) (interchain with G-Cter in SUMO); alternate cross-link involves residue K137. Residue K137 forms a Glycyl lysine isopeptide (Lys-Gly) (interchain with G-Cter in SUMO2); alternate linkage. A Glycyl lysine isopeptide (Lys-Gly) (interchain with G-Cter in SUMO) cross-link involves residue K166. S225 carries the post-translational modification Phosphoserine. A compositionally biased stretch (polar residues) spans 228 to 239 (SSYAESETTDSV). The segment at 228-251 (SSYAESETTDSVPSDEESAEGRPH) is disordered. A Glycyl lysine isopeptide (Lys-Gly) (interchain with G-Cter in SUMO2) cross-link involves residue K260. Residue K293 forms a Glycyl lysine isopeptide (Lys-Gly) (interchain with G-Cter in SUMO) linkage. A disordered region spans residues 297–349 (NPVPYNSSWPPFQDLPLSSSMTPASSSSRPDRETRASVIKKTSDITQARVKSC). Residues 314 to 324 (SSSMTPASSSS) are compositionally biased toward low complexity.

Belongs to the IRF family. Interacts with BRD7, IRF2BP1 and IRF2BP2. Interacts with CREBBP in growing cells; the interaction acetylates IRF2 and regulates IRF2-dependent H4 promoter activity. Post-translationally, acetylated by CBP/ p300 during cell-growth. Acetylation on Lys-75 is required for stimulation of H4 promoter activity. The major sites of sumoylation are Lys-137 and Lys-293. Sumoylation with SUMO1 increases its transcriptional repressor activity on IRF1 and diminishes its ability to activate ISRE and H4 promoter. In terms of tissue distribution, expressed throughout the epithelium of the colon. Also expressed in lamina propria.

It is found in the nucleus. Specifically binds to the upstream regulatory region of type I IFN and IFN-inducible MHC class I genes (the interferon consensus sequence (ICS)) and represses those genes. Also acts as an activator for several genes including H4 and IL7. Constitutively binds to the ISRE promoter to activate IL7. Involved in cell cycle regulation through binding the site II (HiNF-M) promoter region of H4 and activating transcription during cell growth. Antagonizes IRF1 transcriptional activation. This is Interferon regulatory factor 2 (IRF2) from Homo sapiens (Human).